Reading from the N-terminus, the 318-residue chain is Thymidylate synthase (318 aa).

DUMP contacts are provided by residues arginine 25 and 180-181 (RR). Cysteine 200 serves as the catalytic Nucleophile. DUMP contacts are provided by residues 220–223 (RSGD), asparagine 231, and 261–263 (HIY). Aspartate 223 is a (6R)-5,10-methylene-5,6,7,8-tetrahydrofolate binding site. Residue alanine 317 participates in (6R)-5,10-methylene-5,6,7,8-tetrahydrofolate binding.

Belongs to the thymidylate synthase family. Bacterial-type ThyA subfamily. In terms of assembly, homodimer.

Its subcellular location is the cytoplasm. The catalysed reaction is dUMP + (6R)-5,10-methylene-5,6,7,8-tetrahydrofolate = 7,8-dihydrofolate + dTMP. The protein operates within pyrimidine metabolism; dTTP biosynthesis. Catalyzes the reductive methylation of 2'-deoxyuridine-5'-monophosphate (dUMP) to 2'-deoxythymidine-5'-monophosphate (dTMP) while utilizing 5,10-methylenetetrahydrofolate (mTHF) as the methyl donor and reductant in the reaction, yielding dihydrofolate (DHF) as a by-product. This enzymatic reaction provides an intracellular de novo source of dTMP, an essential precursor for DNA biosynthesis. The chain is Thymidylate synthase from Bacillus cereus (strain ATCC 10987 / NRS 248).